We begin with the raw amino-acid sequence, 203 residues long: Probable cytochrome c oxidase subunit 3 (203 aa).

A run of 5 helical transmembrane segments spans residues 30-50 (IIWL…YFVA), 69-89 (LAVP…MGVF), 102-122 (WYFI…YEYY), 142-162 (ITTG…VFLL), and 179-199 (IVVS…FATI).

It belongs to the cytochrome c oxidase subunit 3 family.

It is found in the cell membrane. It catalyses the reaction 4 Fe(II)-[cytochrome c] + O2 + 8 H(+)(in) = 4 Fe(III)-[cytochrome c] + 2 H2O + 4 H(+)(out). The chain is Probable cytochrome c oxidase subunit 3 (ctaE) from Nocardia farcinica (strain IFM 10152).